The sequence spans 285 residues: Guanylate kinase 2, chloroplastic/mitochondrial (285 aa).

Over residues Met1–Arg19 the composition is skewed to low complexity. The N-terminal 42 residues, Met1–Met42, are a transit peptide targeting the chloroplast and mitochondrion. Residues Met1–Asp66 are disordered. Residues Ser20 to Pro36 show a composition bias toward pro residues. The segment covering Arg40–His50 has biased composition (low complexity). The region spanning Pro91–Asp272 is the Guanylate kinase-like domain. Gly98 to Asp105 is an ATP binding site. Catalysis depends on residues Arg130, Arg224, and Arg235. Asn255 is an ATP binding site.

It belongs to the guanylate kinase family. In terms of assembly, monomer.

It is found in the plastid. It localises to the chloroplast. The protein localises to the mitochondrion. It catalyses the reaction GMP + ATP = GDP + ADP. In terms of biological role, essential for recycling GMP and indirectly, cGMP. Essential for chloroplast differentiation at early stage of leaf development. May not be involved in the synthesis and maintenance of the organellar DNA during leaf development. In Oryza sativa subsp. japonica (Rice), this protein is Guanylate kinase 2, chloroplastic/mitochondrial (V2).